Here is a 200-residue protein sequence, read N- to C-terminus: Imidazoleglycerol-phosphate dehydratase (200 aa).

This sequence belongs to the imidazoleglycerol-phosphate dehydratase family.

Its subcellular location is the cytoplasm. The catalysed reaction is D-erythro-1-(imidazol-4-yl)glycerol 3-phosphate = 3-(imidazol-4-yl)-2-oxopropyl phosphate + H2O. Its pathway is amino-acid biosynthesis; L-histidine biosynthesis; L-histidine from 5-phospho-alpha-D-ribose 1-diphosphate: step 6/9. The sequence is that of Imidazoleglycerol-phosphate dehydratase from Chlorobium limicola (strain DSM 245 / NBRC 103803 / 6330).